The chain runs to 454 residues: Protein odr-4 homolog (454 aa).

2 consecutive transmembrane segments (helical) span residues 82-102 (MLPG…ELAN) and 432-452 (IGVI…FHYF).

The protein belongs to the ODR-4 family. As to expression, ubiquitously expressed.

The protein resides in the membrane. Its function is as follows. May play a role in the trafficking of a subset of G-protein coupled receptors. This chain is Protein odr-4 homolog, found in Homo sapiens (Human).